We begin with the raw amino-acid sequence, 307 residues long: N-acetylmuramic acid 6-phosphate etherase (307 aa).

An SIS domain is found at 62–225 (IVSSFNRGGR…STASMIRIGK (164 aa)). The Proton donor role is filled by Glu90. Glu121 is an active-site residue.

Belongs to the GCKR-like family. MurNAc-6-P etherase subfamily. In terms of assembly, homodimer.

It carries out the reaction N-acetyl-D-muramate 6-phosphate + H2O = N-acetyl-D-glucosamine 6-phosphate + (R)-lactate. Its pathway is amino-sugar metabolism; 1,6-anhydro-N-acetylmuramate degradation. It participates in amino-sugar metabolism; N-acetylmuramate degradation. The protein operates within cell wall biogenesis; peptidoglycan recycling. Functionally, specifically catalyzes the cleavage of the D-lactyl ether substituent of MurNAc 6-phosphate, producing GlcNAc 6-phosphate and D-lactate. Together with AnmK, is also required for the utilization of anhydro-N-acetylmuramic acid (anhMurNAc) either imported from the medium or derived from its own cell wall murein, and thus plays a role in cell wall recycling. This chain is N-acetylmuramic acid 6-phosphate etherase, found in Pseudoalteromonas atlantica (strain T6c / ATCC BAA-1087).